The primary structure comprises 338 residues: Large ribosomal subunit protein uL10 (338 aa).

Residues 292–338 (LDDDLKERVSSTASAVEAKEEEAPKEEKEEEKEEEEEAPAAGLGMLF) form a disordered region. Residues 308 to 318 (EAKEEEAPKEE) are compositionally biased toward basic and acidic residues. Acidic residues predominate over residues 319-329 (KEEEKEEEEEA).

This sequence belongs to the universal ribosomal protein uL10 family. In terms of assembly, part of the 50S ribosomal subunit. Forms part of the ribosomal stalk which helps the ribosome interact with GTP-bound translation factors. Forms a heptameric L10(L12)2(L12)2(L12)2 complex, where L10 forms an elongated spine to which the L12 dimers bind in a sequential fashion.

Functionally, forms part of the ribosomal stalk, playing a central role in the interaction of the ribosome with GTP-bound translation factors. This Methanococcus aeolicus (strain ATCC BAA-1280 / DSM 17508 / OCM 812 / Nankai-3) protein is Large ribosomal subunit protein uL10.